The following is a 428-amino-acid chain: Divergent protein kinase domain 1A (428 aa).

Over 1 to 27 the chain is Cytoplasmic; sequence MARSLCPGAWLRKPYYLQARFSYVRMK. Residues 28-48 traverse the membrane as a helical segment; it reads YLFFSWLVVFVGSWIIYVQYS. Residues 49–428 are Lumenal-facing; sequence TYTELCRGKD…WKKISYTNDS (380 aa).

Belongs to the DIPK family. Post-translationally, among the many cysteines in the lumenal domain, most are probably involved in disulfide bonds.

The protein resides in the endoplasmic reticulum membrane. The sequence is that of Divergent protein kinase domain 1A from Homo sapiens (Human).